The primary structure comprises 493 residues: E3 ubiquitin-protein ligase TRIM35 (493 aa).

M1 is modified (N-acetylmethionine). S4 and S8 each carry phosphoserine. The RING-type zinc finger occupies 21 to 61; sequence CAVCYDPFRDAVTLRCGHNFCRGCVSRCWEVQVSPTCPVCK. The segment at 96–137 adopts a B box-type zinc-finger fold; that stretch reads RFSRVCRLHRGQLSLFCLEDKELLCCSCQADPRHQGHRVQPV. Residues C101, H104, C123, and H129 each coordinate Zn(2+). Positions 210-251 form a coiled coil; the sequence is AEETRQKQLLADEKMKQLTEETEVLAHEIERLQMEMKEDDVS. In terms of domain architecture, B30.2/SPRY spans 284–487; sequence LGSLQYRVWK…LRICPLHISV (204 aa).

This sequence belongs to the TRIM/RBCC family. As to quaternary structure, interacts with PKM isoform M2, but not isoform M1; this interaction may compete with that between PKM and FGFR1, and hence reduces FGFR1-dependent tyrosine phosphorylation of PKM. Interacts with IRF7; this interaction promotes IRF7 proteasomal degradation. Interacts with TRAF3; this interaction promotes TRAF3 activation.

The protein localises to the cytoplasm. Its subcellular location is the nucleus. The catalysed reaction is S-ubiquitinyl-[E2 ubiquitin-conjugating enzyme]-L-cysteine + [acceptor protein]-L-lysine = [E2 ubiquitin-conjugating enzyme]-L-cysteine + N(6)-ubiquitinyl-[acceptor protein]-L-lysine.. Its pathway is protein modification; protein ubiquitination. E3 ubiquitin-protein ligase that participates in multiple biological processes including cell death, glucose metabolism, and in particular, the innate immune response. Mediates 'Lys-63'-linked polyubiquitination of TRAF3 thereby promoting type I interferon production via RIG-I signaling pathway. Can also catalyze 'Lys-48'-linked polyubiquitination and proteasomal degradation of viral proteins such as influenza virus PB2. Acts as a negative feedback regulator of TLR7- and TLR9-triggered signaling. Mechanistically, promotes the 'Lys-48'-linked ubiquitination of IRF7 and induces its degradation via a proteasome-dependent pathway. Reduces FGFR1-dependent tyrosine phosphorylation of PKM, inhibiting PKM-dependent lactate production, glucose metabolism, and cell growth. The chain is E3 ubiquitin-protein ligase TRIM35 (TRIM35) from Homo sapiens (Human).